Reading from the N-terminus, the 283-residue chain is Tropomyosin (283 aa).

Positions 1–283 form a coiled coil; it reads MDAIKKKMQA…LDSAFVELIL (283 aa).

This sequence belongs to the tropomyosin family. Homodimer.

Its function is as follows. Tropomyosin, in association with the troponin complex, plays a central role in the calcium dependent regulation of muscle contraction. The protein is Tropomyosin of Locusta migratoria (Migratory locust).